A 550-amino-acid polypeptide reads, in one-letter code: Glucose-6-phosphate isomerase (550 aa).

The Proton donor role is filled by glutamate 356. Residues histidine 387 and lysine 515 contribute to the active site.

The protein belongs to the GPI family.

The protein resides in the cytoplasm. The catalysed reaction is alpha-D-glucose 6-phosphate = beta-D-fructose 6-phosphate. It participates in carbohydrate biosynthesis; gluconeogenesis. Its pathway is carbohydrate degradation; glycolysis; D-glyceraldehyde 3-phosphate and glycerone phosphate from D-glucose: step 2/4. In terms of biological role, catalyzes the reversible isomerization of glucose-6-phosphate to fructose-6-phosphate. This chain is Glucose-6-phosphate isomerase, found in Vibrio vulnificus (strain YJ016).